The primary structure comprises 581 residues: Arginine--tRNA ligase (581 aa).

Positions P126–H136 match the 'HIGH' region motif.

It belongs to the class-I aminoacyl-tRNA synthetase family. In terms of assembly, monomer.

Its subcellular location is the cytoplasm. The catalysed reaction is tRNA(Arg) + L-arginine + ATP = L-arginyl-tRNA(Arg) + AMP + diphosphate. In Shewanella loihica (strain ATCC BAA-1088 / PV-4), this protein is Arginine--tRNA ligase.